Reading from the N-terminus, the 286-residue chain is Pyridoxal kinase PdxY (286 aa).

Substrate-binding positions include Ser9 and 44–45 (TQ). ATP is bound by residues Asp111, Ala143, Glu148, Lys181, and 208–211 (RPLV). Asp223 lines the substrate pocket.

Belongs to the pyridoxine kinase family. PdxY subfamily. In terms of assembly, homodimer. Requires Mg(2+) as cofactor.

The enzyme catalyses pyridoxal + ATP = pyridoxal 5'-phosphate + ADP + H(+). Its pathway is cofactor metabolism; pyridoxal 5'-phosphate salvage; pyridoxal 5'-phosphate from pyridoxal: step 1/1. Its function is as follows. Pyridoxal kinase involved in the salvage pathway of pyridoxal 5'-phosphate (PLP). Catalyzes the phosphorylation of pyridoxal to PLP. This chain is Pyridoxal kinase PdxY, found in Yersinia pestis bv. Antiqua (strain Antiqua).